Reading from the N-terminus, the 155-residue chain is Ribosomal RNA large subunit methyltransferase H (155 aa).

S-adenosyl-L-methionine contacts are provided by residues Leu73, Gly104, and 123–128 (LSPLTL).

The protein belongs to the RNA methyltransferase RlmH family. In terms of assembly, homodimer.

Its subcellular location is the cytoplasm. It catalyses the reaction pseudouridine(1915) in 23S rRNA + S-adenosyl-L-methionine = N(3)-methylpseudouridine(1915) in 23S rRNA + S-adenosyl-L-homocysteine + H(+). Specifically methylates the pseudouridine at position 1915 (m3Psi1915) in 23S rRNA. This Pseudomonas syringae pv. tomato (strain ATCC BAA-871 / DC3000) protein is Ribosomal RNA large subunit methyltransferase H.